Reading from the N-terminus, the 462-residue chain is Hyaluronidase-1 (462 aa).

Residues Met-1 to Gly-52 form the signal peptide. 2 disulfides stabilise this stretch: Cys-71/Cys-361 and Cys-235/Cys-249. N-linked (GlcNAc...) asparagine glycosylation is found at Asn-98 and Asn-127. The active-site Proton donor is Glu-159. N-linked (GlcNAc...) asparagine glycans are attached at residues Asn-244, Asn-265, and Asn-378. Intrachain disulfides connect Cys-386/Cys-397, Cys-391/Cys-446, and Cys-448/Cys-457. An EGF-like domain is found at Cys-446–Cys-457.

This sequence belongs to the glycosyl hydrolase 56 family. Highly expressed in liver, kidney, lung and skin.

It localises to the secreted. Its subcellular location is the lysosome. The catalysed reaction is Random hydrolysis of (1-&gt;4)-linkages between N-acetyl-beta-D-glucosamine and D-glucuronate residues in hyaluronate.. In terms of biological role, may have a role in promoting tumor progression. May block the TGFB1-enhanced cell growth. The protein is Hyaluronidase-1 (Hyal1) of Mus musculus (Mouse).